The following is a 410-amino-acid chain: S-adenosylmethionine synthase (410 aa).

Residue His-15 participates in ATP binding. Position 17 (Asp-17) interacts with Mg(2+). Glu-43 provides a ligand contact to K(+). L-methionine contacts are provided by Glu-56 and Gln-100. The tract at residues Gln-100–Thr-110 is flexible loop. ATP-binding positions include Asp-171–Lys-173, Lys-248–Phe-249, Asp-257, Arg-263–Lys-264, Ala-280, and Lys-284. Residue Asp-257 participates in L-methionine binding. Lys-288 serves as a coordination point for L-methionine.

Belongs to the AdoMet synthase family. Homotetramer; dimer of dimers. The cofactor is Mg(2+). It depends on K(+) as a cofactor.

The protein resides in the cytoplasm. The enzyme catalyses L-methionine + ATP + H2O = S-adenosyl-L-methionine + phosphate + diphosphate. It participates in amino-acid biosynthesis; S-adenosyl-L-methionine biosynthesis; S-adenosyl-L-methionine from L-methionine: step 1/1. Catalyzes the formation of S-adenosylmethionine (AdoMet) from methionine and ATP. The overall synthetic reaction is composed of two sequential steps, AdoMet formation and the subsequent tripolyphosphate hydrolysis which occurs prior to release of AdoMet from the enzyme. In Prochlorococcus marinus (strain MIT 9211), this protein is S-adenosylmethionine synthase.